The chain runs to 331 residues: DNA fragmentation factor subunit alpha (331 aa).

Met-1 carries the post-translational modification N-acetylmethionine. The CIDE-N domain occupies 17 to 96 (TLKPCLLRRN…ALASNEKWAY (80 aa)). Thr-243 carries the post-translational modification Phosphothreonine. The interval 305 to 331 (SLRSISASKASPPGDLQNPKRARQDPT) is disordered. Ser-315 carries the phosphoserine modification.

In terms of assembly, heterodimer of DFFA and DFFB. Post-translationally, caspase-3 cleaves DFF45 at 2 sites to generate an active factor.

It is found in the cytoplasm. Inhibitor of the caspase-activated DNase (DFF40). This is DNA fragmentation factor subunit alpha (DFFA) from Homo sapiens (Human).